The primary structure comprises 304 residues: UDP-N-acetylenolpyruvoylglucosamine reductase (304 aa).

Residues 33–213 enclose the FAD-binding PCMH-type domain; that stretch reads IGGPADIMVI…LEITRDLTER (181 aa). Arg177 is a catalytic residue. The active-site Proton donor is the Ser227. Glu297 is an active-site residue.

The protein belongs to the MurB family. Requires FAD as cofactor.

The protein localises to the cytoplasm. The enzyme catalyses UDP-N-acetyl-alpha-D-muramate + NADP(+) = UDP-N-acetyl-3-O-(1-carboxyvinyl)-alpha-D-glucosamine + NADPH + H(+). The protein operates within cell wall biogenesis; peptidoglycan biosynthesis. Its function is as follows. Cell wall formation. The protein is UDP-N-acetylenolpyruvoylglucosamine reductase of Alkaliphilus oremlandii (strain OhILAs) (Clostridium oremlandii (strain OhILAs)).